We begin with the raw amino-acid sequence, 444 residues long: tRNA-2-methylthio-N(6)-dimethylallyladenosine synthase (444 aa).

The MTTase N-terminal domain occupies 8-122; sequence KTFYIETFGC…LAEMLVQIES (115 aa). 6 residues coordinate [4Fe-4S] cluster: Cys-17, Cys-53, Cys-85, Cys-160, Cys-164, and Cys-167. A Radical SAM core domain is found at 146–376; sequence RGNAHRGYIT…MEHQREIQRA (231 aa). The region spanning 379 to 444 is the TRAM domain; it reads RKHIGETIEV…PNSLVGELVG (66 aa).

It belongs to the methylthiotransferase family. MiaB subfamily. As to quaternary structure, monomer. It depends on [4Fe-4S] cluster as a cofactor.

Its subcellular location is the cytoplasm. It carries out the reaction N(6)-dimethylallyladenosine(37) in tRNA + (sulfur carrier)-SH + AH2 + 2 S-adenosyl-L-methionine = 2-methylsulfanyl-N(6)-dimethylallyladenosine(37) in tRNA + (sulfur carrier)-H + 5'-deoxyadenosine + L-methionine + A + S-adenosyl-L-homocysteine + 2 H(+). In terms of biological role, catalyzes the methylthiolation of N6-(dimethylallyl)adenosine (i(6)A), leading to the formation of 2-methylthio-N6-(dimethylallyl)adenosine (ms(2)i(6)A) at position 37 in tRNAs that read codons beginning with uridine. The protein is tRNA-2-methylthio-N(6)-dimethylallyladenosine synthase of Koribacter versatilis (strain Ellin345).